The chain runs to 156 residues: Ribosomal RNA large subunit methyltransferase H (156 aa).

S-adenosyl-L-methionine contacts are provided by residues Leu73, Gly104, and 123–128 (LSRLTL).

It belongs to the RNA methyltransferase RlmH family. Homodimer.

It is found in the cytoplasm. The catalysed reaction is pseudouridine(1915) in 23S rRNA + S-adenosyl-L-methionine = N(3)-methylpseudouridine(1915) in 23S rRNA + S-adenosyl-L-homocysteine + H(+). Its function is as follows. Specifically methylates the pseudouridine at position 1915 (m3Psi1915) in 23S rRNA. The protein is Ribosomal RNA large subunit methyltransferase H of Thiobacillus denitrificans (strain ATCC 25259 / T1).